Here is a 51-residue protein sequence, read N- to C-terminus: Mating pheromone Er-23 (51 aa).

Cystine bridges form between Cys3/Cys24, Cys6/Cys16, Cys13/Cys47, Cys27/Cys40, and Cys35/Cys51.

Its subcellular location is the secreted. Mating ciliate pheromones (or gamones) are diffusible extracellular communication signals that distinguish different intraspecific classes of cells commonly referred to as 'mating types'. They prepare the latter for conjugation by changing their cell surface properties. The protein is Mating pheromone Er-23 (MAT23) of Euplotes raikovi.